Reading from the N-terminus, the 779-residue chain is MIAMDRIARIPIARWTSRAFRVSAAARQTPMSPLEAHNELEPVYAAIDDRLNTVRSKLNRPLTLAEKVLYGHLDDPERVPVRGETFLKLRPERVALQDATAQMALIQFMASARPQVAVPSTIHCDHLIAAEVGAEEDMAKAKSQNKEVYDFLASAGAKYGLGFWKPGSGIIHQIVLENYAFPGLLMIGTDSHTPNAGGLGACAVGVGGADAVDVMVGLPWELKAPKVIGVKLTGKLQEWASPKDVILKVAGILTVKGGTGAIVEYFGEGVDSLSCTGMGTICNMGAEIGATTSMFPYNSRMGDYLKATGRDGIASLADSFSEQLRADENAVYDQLIEINLSELEPHINGPFTPDLAHPLSKFKEEVEKNGWPAELTVGLIGSCTNSSYEDMARSASVVKQALSHGVKSKSIFNITPGSEQVRATISRDGILDTFTEAGGTVLANACGPCIGQWNRSDVPKGTPNSIITSFNRNFSQRNDGNPQTHAFVASPEIVTAMSLAGSLKFNPATDSLQGADGAEFKLAAPSGDELPVMGFDPGEDTFQPPSDDSTSILVQIDPDSQRLSFLEPFPAWDGKDYTDMPVLIKARGKCTTDHISMAGPWLKFRGHLDNISNNMLIGAVNDENGEINNVKNAVTGEYGTVPDTARAYKAEGVKWVVIGDENYGEGSSREHAALEPRHLGGVAVIVKSFARIHETNLKKQGMLPLTFNNPADYDKIDSSDKVSLVGLKNLTPGEPVTMTVTKADGTSMDILLNHTFNDEQLEWFRAGSALNKIKIDLGT.

The N-terminal 28 residues, 1 to 28 (MIAMDRIARIPIARWTSRAFRVSAAARQ), are a transit peptide targeting the mitochondrion. Substrate-binding positions include Q97 and 190–192 (DSH). Residues C383, C446, and C449 each coordinate [4Fe-4S] cluster. Residues R472, R477, R605, and 668-669 (SR) each bind substrate.

This sequence belongs to the aconitase/IPM isomerase family. As to quaternary structure, monomer. It depends on [4Fe-4S] cluster as a cofactor.

It localises to the mitochondrion. It carries out the reaction citrate = D-threo-isocitrate. The protein operates within carbohydrate metabolism; tricarboxylic acid cycle; isocitrate from oxaloacetate: step 2/2. Functionally, catalyzes the isomerization of citrate to isocitrate via cis-aconitate. The sequence is that of Aconitate hydratase, mitochondrial from Gracilaria gracilis (Red alga).